The following is a 502-amino-acid chain: Lysine--tRNA ligase (502 aa).

Residues Glu398 and Glu405 each contribute to the Mg(2+) site.

The protein belongs to the class-II aminoacyl-tRNA synthetase family. Homodimer. Requires Mg(2+) as cofactor.

It localises to the cytoplasm. It catalyses the reaction tRNA(Lys) + L-lysine + ATP = L-lysyl-tRNA(Lys) + AMP + diphosphate. In Thermotoga sp. (strain RQ2), this protein is Lysine--tRNA ligase.